The primary structure comprises 108 residues: Nascent polypeptide-associated complex protein (108 aa).

The region spanning 1 to 68 (MNPREIRRMM…LREVKKEVEQ (68 aa)) is the NAC-A/B domain.

The protein belongs to the NAC-alpha family. Homodimer. Interacts with the ribosome. Binds ribosomal RNA.

Contacts the emerging nascent chain on the ribosome. This is Nascent polypeptide-associated complex protein from Picrophilus torridus (strain ATCC 700027 / DSM 9790 / JCM 10055 / NBRC 100828 / KAW 2/3).